Here is a 136-residue protein sequence, read N- to C-terminus: Large ribosomal subunit protein uL16c (136 aa).

It belongs to the universal ribosomal protein uL16 family. In terms of assembly, part of the 50S ribosomal subunit.

It is found in the plastid. Its subcellular location is the chloroplast. This chain is Large ribosomal subunit protein uL16c, found in Citrus sinensis (Sweet orange).